Reading from the N-terminus, the 648-residue chain is Nucleoside triphosphatase I (648 aa).

A Helicase ATP-binding domain is found at 48–213; sequence FIGLKNLNSM…NNLIGLLRPN (166 aa). Residue 61-68 participates in ATP binding; sequence WDTGTGKT. The DEXH box signature appears at 151-154; it reads DEVH. A Helicase C-terminal domain is found at 379–542; sequence YIEACRIILN…KINVVFDLLK (164 aa). The tract at residues 468 to 534 is binding to the cap-specific mRNA (nucleoside-2'-O-)-methyltransferase; it reads DIIILDMPWN…DIIKNKQGKI (67 aa).

Belongs to the helicase family. NPH I subfamily. Monomer. Interacts (via C-terminus) with RAP94 (via N-terminus). Interacts with the cap-specific mRNA (nucleoside-2'-O-)-methyltransferase.

The protein localises to the virion. It carries out the reaction a ribonucleoside 5'-triphosphate + H2O = a ribonucleoside 5'-diphosphate + phosphate + H(+). DNA-dependent ATPase required for providing the needed energy to achieve the termination of early transcripts. Acts in concert with the RAP94 subunit of the virion RNA polymerase and the capping enzyme/VTF to catalyze release of UUUUUNU-containing nascent RNA from the elongation complex. NPH-I must bind ssDNA in order to exhibit ATPase activity. This chain is Nucleoside triphosphatase I (NPH1), found in Choristoneura fumiferana (Spruce budworm moth).